Here is a 96-residue protein sequence, read N- to C-terminus: Large ribosomal subunit protein uL23 (96 aa).

Belongs to the universal ribosomal protein uL23 family. Part of the 50S ribosomal subunit. Contacts protein L29, and trigger factor when it is bound to the ribosome.

One of the early assembly proteins it binds 23S rRNA. One of the proteins that surrounds the polypeptide exit tunnel on the outside of the ribosome. Forms the main docking site for trigger factor binding to the ribosome. This is Large ribosomal subunit protein uL23 from Endomicrobium trichonymphae.